The sequence spans 208 residues: Phomoidride biosynthesis cluster protein B (208 aa).

This sequence belongs to the tstB family.

Its function is as follows. Phosphatidylethanolamine-binding protein; part of the gene cluster that mediates the biosynthesis of the antihypercholesterolemic agents phomoidrides which are dimeric anhydrides. Within the pathway, phiB is not essential for dimerization and its function has still to be determined. The pathway begins with the highly reducing polyketide synthase phiA that catalyzes the formation of a C12-fatty acyl-ACP, starting from one acetate and 5 malonate units. The hydrolase phiM is involved in the release of the C12-fatty acyl chain from phiA. The alkylcitrate synthase (ACS) phiJ and the alkylcitrate dehydratase (ACDH) phiI then give rise to decarboxylated monomeric anhydrides by coupling the C12-fatty acyl chain with oxalacetic acid. The cyclase phiC is responsible for the dimerization of the monomeric anhydrides which leads to the production of prephomoidride that contains the characteristic bicyclo[4.3.1]deca-1,6-diene system of phomoidrides. Iterative oxidation catalyzed by the alpha-ketoglutarate-dependent dioxygenase phiK produced then phomoidride A. Finally, the methyltransferase phiE converts phomoidride A to phomoidride B via an acetalization reaction. The phosphatidylethanolamine-binding protein phiB and phiN are not essential for dimerization and their functions have still to be determined. In Fungal sp. (strain ATCC 74256), this protein is Phomoidride biosynthesis cluster protein B.